The primary structure comprises 274 residues: NAD kinase (274 aa).

D59 acts as the Proton acceptor in catalysis. Residues 59-60 (DG), K64, 128-129 (ND), D158, 169-174 (TAYALS), and A193 contribute to the NAD(+) site.

It belongs to the NAD kinase family. A divalent metal cation is required as a cofactor.

Its subcellular location is the cytoplasm. It catalyses the reaction NAD(+) + ATP = ADP + NADP(+) + H(+). Its function is as follows. Involved in the regulation of the intracellular balance of NAD and NADP, and is a key enzyme in the biosynthesis of NADP. Catalyzes specifically the phosphorylation on 2'-hydroxyl of the adenosine moiety of NAD to yield NADP. This Petrotoga mobilis (strain DSM 10674 / SJ95) protein is NAD kinase.